The primary structure comprises 415 residues: Histidine--tRNA ligase (415 aa).

The protein belongs to the class-II aminoacyl-tRNA synthetase family. Homodimer.

It is found in the cytoplasm. It carries out the reaction tRNA(His) + L-histidine + ATP = L-histidyl-tRNA(His) + AMP + diphosphate + H(+). In Idiomarina loihiensis (strain ATCC BAA-735 / DSM 15497 / L2-TR), this protein is Histidine--tRNA ligase.